The primary structure comprises 286 residues: Bifunctional protein FolD (286 aa).

Residues 165–167 and Ser190 contribute to the NADP(+) site; that span reads GRS.

The protein belongs to the tetrahydrofolate dehydrogenase/cyclohydrolase family. As to quaternary structure, homodimer.

It catalyses the reaction (6R)-5,10-methylene-5,6,7,8-tetrahydrofolate + NADP(+) = (6R)-5,10-methenyltetrahydrofolate + NADPH. The enzyme catalyses (6R)-5,10-methenyltetrahydrofolate + H2O = (6R)-10-formyltetrahydrofolate + H(+). Its pathway is one-carbon metabolism; tetrahydrofolate interconversion. Catalyzes the oxidation of 5,10-methylenetetrahydrofolate to 5,10-methenyltetrahydrofolate and then the hydrolysis of 5,10-methenyltetrahydrofolate to 10-formyltetrahydrofolate. This Staphylococcus aureus (strain bovine RF122 / ET3-1) protein is Bifunctional protein FolD.